The following is a 186-amino-acid chain: ATP synthase subunit delta, chloroplastic (186 aa).

This sequence belongs to the ATPase delta chain family. In terms of assembly, F-type ATPases have 2 components, F(1) - the catalytic core - and F(0) - the membrane proton channel. F(1) has five subunits: alpha(3), beta(3), gamma(1), delta(1), epsilon(1). CF(0) has four main subunits: a(1), b(1), b'(1) and c(10-14). The alpha and beta chains form an alternating ring which encloses part of the gamma chain. F(1) is attached to F(0) by a central stalk formed by the gamma and epsilon chains, while a peripheral stalk is formed by the delta, b and b' chains.

It is found in the plastid. The protein resides in the chloroplast thylakoid membrane. F(1)F(0) ATP synthase produces ATP from ADP in the presence of a proton or sodium gradient. F-type ATPases consist of two structural domains, F(1) containing the extramembraneous catalytic core and F(0) containing the membrane proton channel, linked together by a central stalk and a peripheral stalk. During catalysis, ATP synthesis in the catalytic domain of F(1) is coupled via a rotary mechanism of the central stalk subunits to proton translocation. Functionally, this protein is part of the stalk that links CF(0) to CF(1). It either transmits conformational changes from CF(0) to CF(1) or is implicated in proton conduction. This Pyropia yezoensis (Susabi-nori) protein is ATP synthase subunit delta, chloroplastic.